The primary structure comprises 387 residues: Phosphoglycerate kinase (387 aa).

Substrate-binding positions include 21-23, arginine 36, 59-62, arginine 113, and arginine 146; these read DLN and HLGR. Residues lysine 197, glutamate 314, and 340 to 343 contribute to the ATP site; that span reads GGDT.

The protein belongs to the phosphoglycerate kinase family. In terms of assembly, monomer.

It localises to the cytoplasm. The enzyme catalyses (2R)-3-phosphoglycerate + ATP = (2R)-3-phospho-glyceroyl phosphate + ADP. It participates in carbohydrate degradation; glycolysis; pyruvate from D-glyceraldehyde 3-phosphate: step 2/5. This Yersinia pestis bv. Antiqua (strain Antiqua) protein is Phosphoglycerate kinase.